We begin with the raw amino-acid sequence, 412 residues long: Class E basic helix-loop-helix protein 40 (412 aa).

The interval 1-21 is disordered; it reads MERIPSAQPPPTCLPKAPGLE. Positions 1-139 are essential for interaction with BMAL1, E-box binding and repressor activity against the CLOCK-BMAL1 heterodimer; it reads MERIPSAQPP…LSGRNVEAGQ (139 aa). In terms of domain architecture, bHLH spans 52–107; the sequence is TYKLPHRLIEKKRRDRINECIAQLKDLLPEHLKLTTLGHLEKAVVLELTLKHVKAL. Residues 75–79 are necessary for interaction with RXRA and repressor activity against RXRA; that stretch reads LKDLL. Residues 142 to 175 enclose the Orange domain; sequence FCSGFQTCAREVLQYLAKHENTRDLKSSQLVTHL. A Glycyl lysine isopeptide (Lys-Gly) (interchain with G-Cter in SUMO1, SUMO2 and SUMO3) cross-link involves residue K159. K167 participates in a covalent cross-link: Glycyl lysine isopeptide (Lys-Gly) (interchain with G-Cter in SUMO2). 2 disordered regions span residues 182-256 and 279-298; these read LLQG…ELRV and KQES…SDDE. Residue S235 is modified to Phosphoserine. K279 is covalently cross-linked (Glycyl lysine isopeptide (Lys-Gly) (interchain with G-Cter in SUMO1); alternate). Residue K279 forms a Glycyl lysine isopeptide (Lys-Gly) (interchain with G-Cter in SUMO1, SUMO2 and SUMO3); alternate linkage. K279 is covalently cross-linked (Glycyl lysine isopeptide (Lys-Gly) (interchain with G-Cter in SUMO2); alternate). K288 participates in a covalent cross-link: Glycyl lysine isopeptide (Lys-Gly) (interchain with G-Cter in SUMO2). A Phosphoserine modification is found at S383.

Homodimer. Heterodimer with BHLHE41/DEC2. Interacts with TCF3/E47. Interacts with ubiquitin-conjugating enzyme UBE2I/UBC9. Interacts with HDAC1, SUMO1, RXRA and BMAL1. In terms of processing, ubiquitinated; which may lead to proteasomal degradation. Post-translationally, sumoylation inhibits its ubiquitination and promotes its negative regulation of the CLOCK-BMAL1 heterodimer transcriptional activator activity.

Its subcellular location is the cytoplasm. The protein resides in the nucleus. Functionally, transcriptional repressor involved in the regulation of the circadian rhythm by negatively regulating the activity of the clock genes and clock-controlled genes. Acts as the negative limb of a novel autoregulatory feedback loop (DEC loop) which differs from the one formed by the PER and CRY transcriptional repressors (PER/CRY loop). Both these loops are interlocked as it represses the expression of PER1/2 and in turn is repressed by PER1/2 and CRY1/2. Represses the activity of the circadian transcriptional activator: CLOCK-BMAL1|BMAL2 heterodimer by competing for the binding to E-box elements (5'-CACGTG-3') found within the promoters of its target genes. Negatively regulates its own expression and the expression of DBP and BHLHE41/DEC2. Acts as a corepressor of RXR and the RXR-LXR heterodimers and represses the ligand-induced RXRA and NR1H3/LXRA transactivation activity. May be involved in the regulation of chondrocyte differentiation via the cAMP pathway. Represses the transcription of NR0B2 and attentuates the transactivation of NR0B2 by the CLOCK-BMAL1 complex. Drives the circadian rhythm of blood pressure through transcriptional repression of ATP1B1 in the cardiovascular system. The polypeptide is Class E basic helix-loop-helix protein 40 (BHLHE40) (Bos taurus (Bovine)).